We begin with the raw amino-acid sequence, 617 residues long: Probable endochitinase (617 aa).

In terms of domain architecture, GH18 spans Y53 to V426. An intrachain disulfide couples C57 to C82. Residues D109–W110 and G136–S139 each bind chitin. E179 serves as the catalytic Proton donor. Residues Y180 and M245–D248 contribute to the chitin site. N310 is a glycosylation site (N-linked (GlcNAc...) asparagine). Residue W394 participates in chitin binding. 2 consecutive Chitin-binding type-2 domains span residues T478–V534 and A563–K617. Intrachain disulfides connect C511-C524 and C594-C607.

This sequence belongs to the glycosyl hydrolase 18 family. Chitinase class II subfamily.

It carries out the reaction Random endo-hydrolysis of N-acetyl-beta-D-glucosaminide (1-&gt;4)-beta-linkages in chitin and chitodextrins.. In Caenorhabditis elegans, this protein is Probable endochitinase (cht-1).